Consider the following 191-residue polypeptide: Ureidoglycolate lyase (191 aa).

The protein belongs to the ureidoglycolate lyase family. Homodimer.

It catalyses the reaction (S)-ureidoglycolate = urea + glyoxylate. It functions in the pathway nitrogen metabolism; (S)-allantoin degradation. Functionally, catalyzes the catabolism of the allantoin degradation intermediate (S)-ureidoglycolate, generating urea and glyoxylate. Involved in the utilization of allantoin as secondary nitrogen source when primary sources are limiting. The sequence is that of Ureidoglycolate lyase from Schizosaccharomyces pombe (strain 972 / ATCC 24843) (Fission yeast).